The primary structure comprises 258 residues: Global transcriptional regulator CodY (258 aa).

The segment at 1 to 156 (MSTLLDKTRK…SATIVGLEIL (156 aa)) is GAF domain. The H-T-H motif DNA-binding region spans 204-223 (ASKIADKVGITRSVIVNALR).

This sequence belongs to the CodY family.

The protein resides in the cytoplasm. DNA-binding global transcriptional regulator which is involved in the adaptive response to starvation and acts by directly or indirectly controlling the expression of numerous genes in response to nutrient availability. During rapid exponential growth, CodY is highly active and represses genes whose products allow adaptation to nutrient depletion. The protein is Global transcriptional regulator CodY of Clostridium kluyveri (strain NBRC 12016).